The sequence spans 224 residues: Phosphoribosylformylglycinamidine synthase subunit PurQ (224 aa).

The Glutamine amidotransferase type-1 domain maps to 4-224 (RIGVVTFPGT…YSALDAVLTG (221 aa)). The Nucleophile role is filled by Cys87. Residues His195 and Glu197 contribute to the active site.

Part of the FGAM synthase complex composed of 1 PurL, 1 PurQ and 2 PurS subunits.

It is found in the cytoplasm. The enzyme catalyses N(2)-formyl-N(1)-(5-phospho-beta-D-ribosyl)glycinamide + L-glutamine + ATP + H2O = 2-formamido-N(1)-(5-O-phospho-beta-D-ribosyl)acetamidine + L-glutamate + ADP + phosphate + H(+). It carries out the reaction L-glutamine + H2O = L-glutamate + NH4(+). Its pathway is purine metabolism; IMP biosynthesis via de novo pathway; 5-amino-1-(5-phospho-D-ribosyl)imidazole from N(2)-formyl-N(1)-(5-phospho-D-ribosyl)glycinamide: step 1/2. Functionally, part of the phosphoribosylformylglycinamidine synthase complex involved in the purines biosynthetic pathway. Catalyzes the ATP-dependent conversion of formylglycinamide ribonucleotide (FGAR) and glutamine to yield formylglycinamidine ribonucleotide (FGAM) and glutamate. The FGAM synthase complex is composed of three subunits. PurQ produces an ammonia molecule by converting glutamine to glutamate. PurL transfers the ammonia molecule to FGAR to form FGAM in an ATP-dependent manner. PurS interacts with PurQ and PurL and is thought to assist in the transfer of the ammonia molecule from PurQ to PurL. The chain is Phosphoribosylformylglycinamidine synthase subunit PurQ from Mycobacterium bovis (strain ATCC BAA-935 / AF2122/97).